The following is a 312-amino-acid chain: Non-structural protein 12A (312 aa).

Over residues 1-23 the composition is skewed to low complexity; the sequence is MFKSGSGSLKRSGSISSVKSFSG. 3 disordered regions span residues 1 to 37, 62 to 99, and 111 to 161; these read MFKSGSGSLKRSGSISSVKSFSGDSEKGLPPISRGSV, FVPEKTKSEGNLKDKSSVITGNFGSSGPINAHTNQNAD, and ESSK…GTGD. Residues 63-77 show a composition bias toward basic and acidic residues; the sequence is VPEKTKSEGNLKDKS. A compositionally biased stretch (polar residues) spans 78-98; sequence SVITGNFGSSGPINAHTNQNA. A compositionally biased stretch (basic and acidic residues) spans 122–134; sequence DARHTATDSRLSQ.

The protein belongs to the phytoreovirus non-structural protein Pns12A family.

It localises to the host cytoplasm. Constituent of viral factories. Binds to ssRNA and dsRNA. This Alopecurus aequalis (Barnyard grass) protein is Non-structural protein 12A.